The sequence spans 134 residues: Fluoride-specific ion channel FluC 2 (134 aa).

The next 4 helical transmembrane spans lie at 1–21 (MNYFAVALGGFFGAIAREITG), 28–48 (IFPVGTLAINLSGSFLLLFFM), 68–88 (GFLGAYTTFSTMTKEIYLLLF), and 92–112 (LLIGFAYLFLSLSGGFLSGIL). Positions 71 and 74 each coordinate Na(+).

The protein belongs to the fluoride channel Fluc/FEX (TC 1.A.43) family.

It localises to the cell membrane. It carries out the reaction fluoride(in) = fluoride(out). With respect to regulation, na(+) is not transported, but it plays an essential structural role and its presence is essential for fluoride channel function. Functionally, fluoride-specific ion channel. Important for reducing fluoride concentration in the cell, thus reducing its toxicity. This Carboxydothermus hydrogenoformans (strain ATCC BAA-161 / DSM 6008 / Z-2901) protein is Fluoride-specific ion channel FluC 2.